The sequence spans 305 residues: Acetyl-coenzyme A carboxylase carboxyl transferase subunit beta (305 aa).

The 269-residue stretch at 25–293 (LWVQCPACQQ…LPKVESVASL (269 aa)) folds into the CoA carboxyltransferase N-terminal domain. Residues Cys29, Cys32, Cys48, and Cys51 each coordinate Zn(2+). A C4-type zinc finger spans residues 29 to 51 (CPACQQMIFARDLEKNQRVCTHC).

Belongs to the AccD/PCCB family. As to quaternary structure, acetyl-CoA carboxylase is a heterohexamer composed of biotin carboxyl carrier protein (AccB), biotin carboxylase (AccC) and two subunits each of ACCase subunit alpha (AccA) and ACCase subunit beta (AccD). Zn(2+) is required as a cofactor.

It localises to the cytoplasm. The catalysed reaction is N(6)-carboxybiotinyl-L-lysyl-[protein] + acetyl-CoA = N(6)-biotinyl-L-lysyl-[protein] + malonyl-CoA. Its pathway is lipid metabolism; malonyl-CoA biosynthesis; malonyl-CoA from acetyl-CoA: step 1/1. Component of the acetyl coenzyme A carboxylase (ACC) complex. Biotin carboxylase (BC) catalyzes the carboxylation of biotin on its carrier protein (BCCP) and then the CO(2) group is transferred by the transcarboxylase to acetyl-CoA to form malonyl-CoA. In Granulibacter bethesdensis (strain ATCC BAA-1260 / CGDNIH1), this protein is Acetyl-coenzyme A carboxylase carboxyl transferase subunit beta.